The primary structure comprises 198 residues: Large ribosomal subunit protein bL25 (198 aa).

The protein belongs to the bacterial ribosomal protein bL25 family. CTC subfamily. Part of the 50S ribosomal subunit; part of the 5S rRNA/L5/L18/L25 subcomplex. Contacts the 5S rRNA. Binds to the 5S rRNA independently of L5 and L18.

Its function is as follows. This is one of the proteins that binds to the 5S RNA in the ribosome where it forms part of the central protuberance. This chain is Large ribosomal subunit protein bL25, found in Gloeothece citriformis (strain PCC 7424) (Cyanothece sp. (strain PCC 7424)).